The sequence spans 295 residues: Beta-chimaerin (295 aa).

The Phorbol-ester/DAG-type zinc-finger motif lies at 41-91 (THNFKVHTFRGPHWCEYCANFMWGLIAQGVRCSDCGLNVHKQCSKHVPNDC). The region spanning 104–295 (CDLTTLVKAH…ILIENEDVLF (192 aa)) is the Rho-GAP domain.

As to expression, found in cerebellum and testis.

The protein resides in the membrane. Its activity is regulated as follows. In the inactive state, the N terminus protrudes into the active site of the Rho-GAP domain, sterically blocking Rac binding. Phospholipid binding to the Phorbol-ester/DAG-type zinc-finger/C1 domain triggers the cooperative dissociation of these interactions, allowing the N-terminus to move out of the active site and thereby activating the enzyme. Functionally, GTPase-activating protein for p21-rac. The sequence is that of Beta-chimaerin (Chn2) from Rattus norvegicus (Rat).